We begin with the raw amino-acid sequence, 159 residues long: Cathelicidin-5 (159 aa).

A signal peptide spans 1-29 (METQRASLSLGRWSLWLLLLGLALPSASA). A Pyrrolidone carboxylic acid modification is found at glutamine 30. Positions 30 to 131 (QALSYREAVL…DITCAVPQSV (102 aa)) are excised as a propeptide. 2 disulfides stabilise this stretch: cysteine 86–cysteine 97 and cysteine 108–cysteine 125.

Belongs to the cathelicidin family.

The protein resides in the secreted. In terms of biological role, exerts a potent antimicrobial activity against Gram-negative and Gram-positive bacteria, including methicillin-resistant Staphylococcus aureus, and fungi. In Bos taurus (Bovine), this protein is Cathelicidin-5 (CATHL5).